A 251-amino-acid chain; its full sequence is Triosephosphate isomerase (251 aa).

10–12 (NWK) serves as a coordination point for substrate. His98 functions as the Electrophile in the catalytic mechanism. The active-site Proton acceptor is Glu169. Substrate-binding positions include Gly175, Ser213, and 234 to 235 (GG).

It belongs to the triosephosphate isomerase family. In terms of assembly, homodimer.

The protein localises to the cytoplasm. The catalysed reaction is D-glyceraldehyde 3-phosphate = dihydroxyacetone phosphate. The protein operates within carbohydrate biosynthesis; gluconeogenesis. It participates in carbohydrate degradation; glycolysis; D-glyceraldehyde 3-phosphate from glycerone phosphate: step 1/1. Functionally, involved in the gluconeogenesis. Catalyzes stereospecifically the conversion of dihydroxyacetone phosphate (DHAP) to D-glyceraldehyde-3-phosphate (G3P). The polypeptide is Triosephosphate isomerase (Paracidovorax citrulli (strain AAC00-1) (Acidovorax citrulli)).